We begin with the raw amino-acid sequence, 146 residues long: Probable glycine cleavage system H protein 1, mitochondrial (146 aa).

The transit peptide at 1–30 (MLKTLRFGTRAFGQNLNIAKRNFCTRYTND) directs the protein to the mitochondrion. Positions 41 to 123 (NYRLGITDFA…MGDGWIVEYK (83 aa)) constitute a Lipoyl-binding domain. An N6-lipoyllysine modification is found at lysine 82.

This sequence belongs to the GcvH family. The glycine cleavage system is composed of four proteins: P, T, L and H. (R)-lipoate serves as cofactor.

It localises to the mitochondrion. Its function is as follows. The glycine cleavage system catalyzes the degradation of glycine. The H protein shuttles the methylamine group of glycine from the P protein to the T protein. The protein is Probable glycine cleavage system H protein 1, mitochondrial (gcvH1) of Dictyostelium discoideum (Social amoeba).